The primary structure comprises 84 residues: uncharacterized protein (84 aa).

A compositionally biased stretch (low complexity) spans 34–54 (ATSTASSSAAKNTTSSSKNAA). The disordered stretch occupies residues 34-57 (ATSTASSSAAKNTTSSSKNAAPGM). Residue Asn45 is glycosylated (N-linked (GlcNAc...) asparagine). A helical transmembrane segment spans residues 66–83 (YGIIMAAFAAVSFVLGTG).

It localises to the endoplasmic reticulum membrane. This is an uncharacterized protein from Saccharomyces cerevisiae (strain ATCC 204508 / S288c) (Baker's yeast).